Reading from the N-terminus, the 634-residue chain is Threonine--tRNA ligase (634 aa).

Residues 1-61 enclose the TGS domain; it reads MINIRFPDGS…NSNCELRLIT (61 aa). Residues 241-532 form a catalytic region; the sequence is DHRKIGKVLD…LIEHYAGNLP (292 aa). The Zn(2+) site is built by Cys332, His383, and His509.

Belongs to the class-II aminoacyl-tRNA synthetase family. In terms of assembly, homodimer. Requires Zn(2+) as cofactor.

It localises to the cytoplasm. The catalysed reaction is tRNA(Thr) + L-threonine + ATP = L-threonyl-tRNA(Thr) + AMP + diphosphate + H(+). In terms of biological role, catalyzes the attachment of threonine to tRNA(Thr) in a two-step reaction: L-threonine is first activated by ATP to form Thr-AMP and then transferred to the acceptor end of tRNA(Thr). Also edits incorrectly charged L-seryl-tRNA(Thr). This is Threonine--tRNA ligase from Francisella tularensis subsp. holarctica (strain FTNF002-00 / FTA).